A 193-amino-acid chain; its full sequence is Rho-related protein racF1 (193 aa).

A GTP-binding site is contributed by 10 to 17; that stretch reads GDGAVGKT. The Effector region motif lies at 32–40; it reads YIPTVFDNY. Residues 57–61 and 115–118 each bind GTP; these read DTAGQ and TKQD. Cysteine 190 carries the post-translational modification Cysteine methyl ester. Cysteine 190 is lipidated: S-geranylgeranyl cysteine. Residues 191 to 193 constitute a propeptide, removed in mature form; the sequence is TIM.

Belongs to the small GTPase superfamily. Rho family. As to quaternary structure, interacts with pakB.

The protein resides in the membrane. In terms of biological role, might act in concert and/or share functions with other members of the RHO family in the regulation of a subset of cytoskeletal rearrangements that are required for these processes. In Dictyostelium discoideum (Social amoeba), this protein is Rho-related protein racF1 (racF1).